Reading from the N-terminus, the 390-residue chain is Leucine aminopeptidase 1 (390 aa).

Positions 1-18 are cleaved as a signal peptide; the sequence is MKLSTALVLGATATGAWS. The propeptide occupies 19–90; it reads YAIPQLEQEV…FPTLDAGSYV (72 aa). Asn-120 carries N-linked (GlcNAc...) asparagine glycosylation. The Zn(2+) site is built by His-190, Asp-209, Glu-248, and Asp-275. Cys-324 and Cys-328 are disulfide-bonded. Position 357 (His-357) interacts with Zn(2+).

It belongs to the peptidase M28 family. M28E subfamily. In terms of assembly, monomer. Zn(2+) serves as cofactor.

The protein localises to the secreted. Functionally, extracellular aminopeptidase that allows assimilation of proteinaceous substrates. In Emericella nidulans (strain FGSC A4 / ATCC 38163 / CBS 112.46 / NRRL 194 / M139) (Aspergillus nidulans), this protein is Leucine aminopeptidase 1 (lap1).